We begin with the raw amino-acid sequence, 293 residues long: ATP synthase gamma chain (293 aa).

The protein belongs to the ATPase gamma chain family. As to quaternary structure, F-type ATPases have 2 components, CF(1) - the catalytic core - and CF(0) - the membrane proton channel. CF(1) has five subunits: alpha(3), beta(3), gamma(1), delta(1), epsilon(1). CF(0) has three main subunits: a, b and c.

It is found in the cell membrane. Its function is as follows. Produces ATP from ADP in the presence of a proton gradient across the membrane. The gamma chain is believed to be important in regulating ATPase activity and the flow of protons through the CF(0) complex. The polypeptide is ATP synthase gamma chain (Streptococcus agalactiae serotype III (strain NEM316)).